A 78-amino-acid chain; its full sequence is Large ribosomal subunit protein eL20 (78 aa).

Belongs to the eukaryotic ribosomal protein eL20 family. As to quaternary structure, part of the 50S ribosomal subunit. Binds 23S rRNA.

The protein is Large ribosomal subunit protein eL20 of Pyrobaculum arsenaticum (strain DSM 13514 / JCM 11321 / PZ6).